The chain runs to 443 residues: Xaa-Pro dipeptidase (443 aa).

Asp-246, Asp-257, His-339, Glu-384, and Glu-423 together coordinate Mn(2+).

This sequence belongs to the peptidase M24B family. Bacterial-type prolidase subfamily. Mn(2+) is required as a cofactor.

It catalyses the reaction Xaa-L-Pro dipeptide + H2O = an L-alpha-amino acid + L-proline. Functionally, splits dipeptides with a prolyl residue in the C-terminal position. The sequence is that of Xaa-Pro dipeptidase from Salmonella paratyphi B (strain ATCC BAA-1250 / SPB7).